A 662-amino-acid chain; its full sequence is DNA ligase (662 aa).

Residues 34-38 (DYDYD), 83-84 (SI), and E113 contribute to the NAD(+) site. K115 (N6-AMP-lysine intermediate) is an active-site residue. 4 residues coordinate NAD(+): R136, E172, K286, and K310. Zn(2+) contacts are provided by C404, C407, C422, and C427. The BRCT domain maps to 583-662 (RASASCQGKT…SDLLKILYPN (80 aa)).

It belongs to the NAD-dependent DNA ligase family. LigA subfamily. Mg(2+) is required as a cofactor. It depends on Mn(2+) as a cofactor.

The catalysed reaction is NAD(+) + (deoxyribonucleotide)n-3'-hydroxyl + 5'-phospho-(deoxyribonucleotide)m = (deoxyribonucleotide)n+m + AMP + beta-nicotinamide D-nucleotide.. Its function is as follows. DNA ligase that catalyzes the formation of phosphodiester linkages between 5'-phosphoryl and 3'-hydroxyl groups in double-stranded DNA using NAD as a coenzyme and as the energy source for the reaction. It is essential for DNA replication and repair of damaged DNA. The polypeptide is DNA ligase (Chlamydia felis (strain Fe/C-56) (Chlamydophila felis)).